Here is a 523-residue protein sequence, read N- to C-terminus: Probable 3-ketoacyl-CoA synthase 20 (523 aa).

A run of 2 helical transmembrane segments spans residues Ile31–Gly55 and Ala78–Ser96. The region spanning Tyr93–Arg382 is the FAE domain. Active-site residues include Cys237, His317, His401, His405, and Asn438.

The protein belongs to the thiolase-like superfamily. Chalcone/stilbene synthases family. In terms of tissue distribution, highly expressed in leaf sheaths. Expressed in leaves, flag leaves and panicles.

The protein localises to the membrane. The catalysed reaction is a very-long-chain acyl-CoA + malonyl-CoA + H(+) = a very-long-chain 3-oxoacyl-CoA + CO2 + CoA. Contributes to fatty acids elongation. Plays a role in controlling leaf anatomy and plant architecture. In Oryza sativa subsp. japonica (Rice), this protein is Probable 3-ketoacyl-CoA synthase 20.